Here is an 892-residue protein sequence, read N- to C-terminus: Alpha-actinin-1 (892 aa).

N-acetylmethionine is present on methionine 1. The tract at residues 1–247 is actin-binding; sequence MDHYDSQQTN…IMTYVSSFYH (247 aa). Serine 6 carries the phosphoserine modification. Tyrosine 12 is subject to Phosphotyrosine; by FAK1. 2 consecutive Calponin-homology (CH) domains span residues 31–135 and 144–250; these read KQQR…LRFA and TSAK…HAFS. Residues lysine 95 and lysine 195 each carry the N6-acetyllysine modification. Spectrin repeat units follow at residues 274 to 384, 394 to 499, 509 to 620, and 630 to 733; these read QLME…WLLN, HLAE…ALER, QLYL…ALTE, and RLRK…EVEN. An interaction with DDN region spans residues 274–733; that stretch reads QLMEDYEKLA…IARTINEVEN (460 aa). The residue at position 471 (serine 471) is a Phosphoserine. Residue lysine 676 is modified to N6-acetyllysine. Serine 677 bears the Phosphoserine mark. 2 consecutive EF-hand domains span residues 746–781 and 787–822; these read EQMN…LGYD and QGEA…ETAD. Ca(2+)-binding residues include aspartate 759, aspartate 761, serine 763, threonine 765, and glutamate 770. Residue serine 890 is modified to Phosphoserine.

It belongs to the alpha-actinin family. As to quaternary structure, homodimer; antiparallel. Interacts with MYOZ2, TTID and LPP. Interacts with DDN. Interacts with PSD. Interacts with MICALL2. Interacts with DNM2 and CTTN. Interacts with PDLIM1. Interacts with PDLIM2. Interacts with PDLIM4 (via PDZ domain). Interacts with IGSF8.

The protein resides in the cytoplasm. It is found in the cytoskeleton. The protein localises to the myofibril. Its subcellular location is the sarcomere. It localises to the z line. The protein resides in the cell membrane. It is found in the cell junction. The protein localises to the cell projection. Its subcellular location is the ruffle. In terms of biological role, F-actin cross-linking protein which is thought to anchor actin to a variety of intracellular structures. Association with IGSF8 regulates the immune synapse formation and is required for efficient T-cell activation. The sequence is that of Alpha-actinin-1 (Actn1) from Mus musculus (Mouse).